A 199-amino-acid polypeptide reads, in one-letter code: MYYPEPLNKLITALGRLPGIGPKTAQRLAFHLLKVPASEARDLAAAILEARQKTIYCSICGNFTDRDPCRLCSDPERDHSCICVVEEARDIIALEKTRQYRGLYHVLQGAISPVDGIGPEQLRVKELLARLHDGKVKEVILATNADVEGESTALYLDKLLKTLGVKVTRLAYGLPVGGDLEYADEVTLARAFAGRHELE.

The C4-type zinc-finger motif lies at 57-72 (CSICGNFTDRDPCRLC). Residues 80–175 (SCICVVEEAR…KVTRLAYGLP (96 aa)) enclose the Toprim domain.

This sequence belongs to the RecR family.

May play a role in DNA repair. It seems to be involved in an RecBC-independent recombinational process of DNA repair. It may act with RecF and RecO. This is Recombination protein RecR from Moorella thermoacetica (strain ATCC 39073 / JCM 9320).